Here is a 76-residue protein sequence, read N- to C-terminus: MTDVETTYADFIASGRTGRRNAIHDILVSSASGNSNELALKLAGLDINKTEGEEDAQRNSTEQSGEAQGEAAKSES.

Position 2 is an N-acetylthreonine (Thr-2). The segment at 49–76 (KTEGEEDAQRNSTEQSGEAQGEAAKSES) is disordered.

It belongs to the PKI family.

Extremely potent competitive inhibitor of cAMP-dependent protein kinase activity, this protein interacts with the catalytic subunit of the enzyme after the cAMP-induced dissociation of its regulatory chains. The chain is cAMP-dependent protein kinase inhibitor alpha (PKIA) from Bos taurus (Bovine).